Consider the following 254-residue polypeptide: Alcohol dehydrogenase 2 (254 aa).

10–33 (FVAGLGGIGFDTSREIVKSGPKNL) contacts NAD(+). A substrate-binding site is contributed by Ser-138. Tyr-151 serves as the catalytic Proton acceptor.

This sequence belongs to the short-chain dehydrogenases/reductases (SDR) family. In terms of assembly, homodimer.

It carries out the reaction a primary alcohol + NAD(+) = an aldehyde + NADH + H(+). It catalyses the reaction a secondary alcohol + NAD(+) = a ketone + NADH + H(+). This chain is Alcohol dehydrogenase 2 (Adh2), found in Drosophila wheeleri (Fruit fly).